Here is a 788-residue protein sequence, read N- to C-terminus: Leucine-rich repeat and fibronectin type-III domain-containing protein 2 (788 aa).

A signal peptide spans 1–20 (METLLGGLLAFGMAFAVVDA). Residues 21 to 52 (CPKYCVCQNLSESLGTLCPSKGLLFVPPDIDR) enclose the LRRNT domain. Residues 21–534 (CPKYCVCQNL…MHSQILGGTM (514 aa)) lie on the Extracellular side of the membrane. Residue N29 is glycosylated (N-linked (GlcNAc...) asparagine). 7 LRR repeats span residues 53–74 (RTVE…DFAN), 77–98 (GLVD…SFLD), 101–122 (SLRS…TLRG), 125–146 (NLQH…AFED), 150–171 (TLED…SVRR), 174–195 (NLHQ…TFAD), and 198–219 (KLAR…PIFA). Residues 242 to 288 (NPLHCNCELLWLRRLERDDDLETCGSPGSLKGRYFWHIREEEFVCEP) form the LRRCT domain. Residues 289–375 (PLITQHTHKL…GEATATVEVS (87 aa)) enclose the Ig-like domain. C310 and C359 are oxidised to a cystine. N-linked (GlcNAc...) asparagine glycosylation is found at N332, N341, and N384. The segment at 383 to 423 (SNSTSRMAPPKSRLSDITGSSKTSRGGGGSGAGEPPKSTPE) is disordered. Residues 422-518 (PERAVLVSDV…GCAQFFTKAD (97 aa)) enclose the Fibronectin type-III domain. A helical transmembrane segment spans residues 535–555 (ILVIGGIIVATLLVFIVILMV). Residues 556–788 (RYKVCNHDTP…SSEWVMESTV (233 aa)) are Cytoplasmic-facing. Positions 620 to 631 (CDSSSSSSLGSG) are enriched in low complexity. 2 disordered regions span residues 620–655 (CDSS…PSLD) and 668–711 (SQRK…RSLL). Residues 642 to 651 (RLPPPAPRPK) show a composition bias toward pro residues. The short motif at 785 to 788 (ESTV) is the PDZ-binding element.

This sequence belongs to the LRFN family. In terms of assembly, forms heteromeric complexes with LRFN1, LRFN3, LRFN4 and LRFN5. Can form homomeric complexes, but not across cell junctions. Interacts with DLG4. Directly interacts with DLG1, DLG2 and DLG3. Directly interacts with 2 NMDA receptor subunits GRIN1 and GRIN2A. Glycosylated. Predominantly expressed in the brain, with a weak, but broad expression in the cerebral cortex and diencephalic nuclei. Strongly expressed in both the pyramidal layer and the dentate gyrus of the hippocampus. Also detected in other parts of the central nervous system, including the olfactory bulb, pons, cerebellum, and medulla oblongata, as well as in the peripheral nervous system, such as the ganglia of cranial nerves and the dorsal root ganglion during gestation.

The protein resides in the membrane. It is found in the synapse. Its subcellular location is the postsynaptic cell membrane. Functionally, promotes neurite outgrowth in hippocampal neurons. Enhances the cell surface expression of 2 NMDA receptor subunits GRIN1 and GRIN2A. May play a role in redistributing DLG4 to the cell periphery. This chain is Leucine-rich repeat and fibronectin type-III domain-containing protein 2 (Lrfn2), found in Mus musculus (Mouse).